Reading from the N-terminus, the 86-residue chain is uncharacterized protein (86 aa).

This is an uncharacterized protein from Saccharomyces cerevisiae (strain ATCC 204508 / S288c) (Baker's yeast).